The sequence spans 314 residues: Ornithine carbamoyltransferase (314 aa).

Carbamoyl phosphate-binding positions include 61–64 (STRT), Gln88, Arg112, and 139–142 (HPCQ). L-ornithine is bound by residues Asn170, Asp234, and 238 to 239 (SM). Residues 274–275 (CL) and Arg302 each bind carbamoyl phosphate.

Belongs to the aspartate/ornithine carbamoyltransferase superfamily. OTCase family.

It is found in the cytoplasm. The enzyme catalyses carbamoyl phosphate + L-ornithine = L-citrulline + phosphate + H(+). Its pathway is amino-acid biosynthesis; L-arginine biosynthesis; L-arginine from L-ornithine and carbamoyl phosphate: step 1/3. In terms of biological role, reversibly catalyzes the transfer of the carbamoyl group from carbamoyl phosphate (CP) to the N(epsilon) atom of ornithine (ORN) to produce L-citrulline. The sequence is that of Ornithine carbamoyltransferase from Anoxybacillus flavithermus (strain DSM 21510 / WK1).